A 240-amino-acid chain; its full sequence is Ribonuclease P protein component (240 aa).

The interval 1-140 (MDEKDLATQQ…KKAGGKGLVS (140 aa)) is disordered. The span at 40–51 (APPPHRVIPPHP) shows a compositional bias: pro residues. The segment at 47–123 (IPPHPGLRQD…PGPDRDGGSK (77 aa)) is insert. Positions 122–132 (SKASRASSPKK) are enriched in low complexity.

The protein belongs to the RnpA family. Consists of a catalytic RNA component (M1 or rnpB) and a protein subunit.

The enzyme catalyses Endonucleolytic cleavage of RNA, removing 5'-extranucleotides from tRNA precursor.. Its function is as follows. RNaseP catalyzes the removal of the 5'-leader sequence from pre-tRNA to produce the mature 5'-terminus. It can also cleave other RNA substrates such as 4.5S RNA. The protein component plays an auxiliary but essential role in vivo by binding to the 5'-leader sequence and broadening the substrate specificity of the ribozyme. The chain is Ribonuclease P protein component from Thermus filiformis.